Here is a 139-residue protein sequence, read N- to C-terminus: Thioredoxin 2 (139 aa).

A zinc finger spans residues 5-18; sequence CTHCQAINRIPDDR. A Thioredoxin domain is found at 26-139; sequence GRCGHDLFDG…PFDSWLNESL (114 aa). A disulfide bridge connects residues C64 and C67.

This sequence belongs to the thioredoxin family.

It is found in the cytoplasm. The catalysed reaction is [protein]-dithiol + NAD(+) = [protein]-disulfide + NADH + H(+). The enzyme catalyses [protein]-dithiol + NADP(+) = [protein]-disulfide + NADPH + H(+). In terms of biological role, efficient electron donor for the essential enzyme ribonucleotide reductase. Is also able to reduce the interchain disulfide bridges of insulin. This Escherichia coli O6:H1 (strain CFT073 / ATCC 700928 / UPEC) protein is Thioredoxin 2 (trxC).